Here is a 470-residue protein sequence, read N- to C-terminus: Synaptotagmin-17 (470 aa).

Residues 54-112 form a disordered region; sequence PPWLMASRSNDKDGDSVHTASDVPLTPRTNSPDGRRSSSDTSKSTYSLTRRISSLDSRR. Low complexity predominate over residues 92–112; the sequence is SDTSKSTYSLTRRISSLDSRR. Serine 114 and serine 115 each carry phosphoserine. 2 consecutive C2 domains span residues 180 to 306 and 317 to 451; these read QLGM…HWWK and ELGE…EQWH.

The protein belongs to the synaptotagmin family.

It is found in the membrane. Its function is as follows. Plays a role in dendrite formation by melanocytes. The chain is Synaptotagmin-17 (Syt17) from Mus musculus (Mouse).